The primary structure comprises 736 residues: Phosphoribosylformylglycinamidine synthase subunit PurL (736 aa).

The active site involves His48. The ATP site is built by Tyr51 and Lys90. Glu92 is a binding site for Mg(2+). Substrate is bound by residues 93–96 (SHNH) and Arg115. His94 acts as the Proton acceptor in catalysis. Asp116 contributes to the Mg(2+) binding site. Gln239 serves as a coordination point for substrate. Asp267 is a Mg(2+) binding site. 311 to 313 (ESQ) provides a ligand contact to substrate. The ATP site is built by Asp492 and Gly529. A Mg(2+)-binding site is contributed by Asn530. Ser532 is a binding site for substrate.

It belongs to the FGAMS family. In terms of assembly, monomer. Part of the FGAM synthase complex composed of 1 PurL, 1 PurQ and 2 PurS subunits.

The protein localises to the cytoplasm. It catalyses the reaction N(2)-formyl-N(1)-(5-phospho-beta-D-ribosyl)glycinamide + L-glutamine + ATP + H2O = 2-formamido-N(1)-(5-O-phospho-beta-D-ribosyl)acetamidine + L-glutamate + ADP + phosphate + H(+). It participates in purine metabolism; IMP biosynthesis via de novo pathway; 5-amino-1-(5-phospho-D-ribosyl)imidazole from N(2)-formyl-N(1)-(5-phospho-D-ribosyl)glycinamide: step 1/2. Part of the phosphoribosylformylglycinamidine synthase complex involved in the purines biosynthetic pathway. Catalyzes the ATP-dependent conversion of formylglycinamide ribonucleotide (FGAR) and glutamine to yield formylglycinamidine ribonucleotide (FGAM) and glutamate. The FGAM synthase complex is composed of three subunits. PurQ produces an ammonia molecule by converting glutamine to glutamate. PurL transfers the ammonia molecule to FGAR to form FGAM in an ATP-dependent manner. PurS interacts with PurQ and PurL and is thought to assist in the transfer of the ammonia molecule from PurQ to PurL. In Bradyrhizobium sp. (strain ORS 278), this protein is Phosphoribosylformylglycinamidine synthase subunit PurL.